The sequence spans 153 residues: Small ribosomal subunit protein eS19 (153 aa).

It belongs to the eukaryotic ribosomal protein eS19 family. In terms of assembly, part of the 30S ribosomal subunit.

Its function is as follows. May be involved in maturation of the 30S ribosomal subunit. This Aeropyrum pernix (strain ATCC 700893 / DSM 11879 / JCM 9820 / NBRC 100138 / K1) protein is Small ribosomal subunit protein eS19.